A 300-amino-acid chain; its full sequence is Ribonuclease HIII (300 aa).

Residues 83 to 300 (IPIIGSDEVG…THKAQALLTK (218 aa)) enclose the RNase H type-2 domain. A divalent metal cation is bound by residues Asp89, Glu90, and Asp194.

This sequence belongs to the RNase HII family. RnhC subfamily. Mn(2+) serves as cofactor. Mg(2+) is required as a cofactor.

It localises to the cytoplasm. The enzyme catalyses Endonucleolytic cleavage to 5'-phosphomonoester.. In terms of biological role, endonuclease that specifically degrades the RNA of RNA-DNA hybrids. In Streptococcus pyogenes serotype M2 (strain MGAS10270), this protein is Ribonuclease HIII.